We begin with the raw amino-acid sequence, 106 residues long: Large ribosomal subunit protein eL42 (106 aa).

4 residues coordinate Zn(2+): Cys12, Cys17, Cys74, and Cys77.

It belongs to the eukaryotic ribosomal protein eL42 family. In terms of assembly, component of the large ribosomal subunit. Mature ribosomes consist of a small (40S) and a large (60S) subunit. The 40S subunit contains about 32 different proteins and 1 molecule of RNA (18S). The 60S subunit contains 45 different proteins and 3 molecules of RNA (25S, 5.8S and 5S). Requires Zn(2+) as cofactor.

It is found in the cytoplasm. Its function is as follows. Component of the ribosome, a large ribonucleoprotein complex responsible for the synthesis of proteins in the cell. The small ribosomal subunit (SSU) binds messenger RNAs (mRNAs) and translates the encoded message by selecting cognate aminoacyl-transfer RNA (tRNA) molecules. The large subunit (LSU) contains the ribosomal catalytic site termed the peptidyl transferase center (PTC), which catalyzes the formation of peptide bonds, thereby polymerizing the amino acids delivered by tRNAs into a polypeptide chain. The nascent polypeptides leave the ribosome through a tunnel in the LSU and interact with protein factors that function in enzymatic processing, targeting, and the membrane insertion of nascent chains at the exit of the ribosomal tunnel. In Candida albicans (strain SC5314 / ATCC MYA-2876) (Yeast), this protein is Large ribosomal subunit protein eL42 (RPL44).